Consider the following 161-residue polypeptide: Globin CTT-VIIB-4 (161 aa).

Residues methionine 1–alanine 16 form the signal peptide. Residues proline 18–leucine 161 form the Globin domain. Positions 76 and 111 each coordinate heme b.

The protein belongs to the globin family. Homodimer.

The protein is Globin CTT-VIIB-4 (CTT-7B4) of Chironomus thummi thummi (Midge).